Consider the following 362-residue polypeptide: Methylthioribose-1-phosphate isomerase (362 aa).

Catalysis depends on Asp252, which acts as the Proton donor.

The protein belongs to the eIF-2B alpha/beta/delta subunits family. MtnA subfamily.

It localises to the cytoplasm. It is found in the nucleus. It catalyses the reaction 5-(methylsulfanyl)-alpha-D-ribose 1-phosphate = 5-(methylsulfanyl)-D-ribulose 1-phosphate. It participates in amino-acid biosynthesis; L-methionine biosynthesis via salvage pathway; L-methionine from S-methyl-5-thio-alpha-D-ribose 1-phosphate: step 1/6. Catalyzes the interconversion of methylthioribose-1-phosphate (MTR-1-P) into methylthioribulose-1-phosphate (MTRu-1-P). The protein is Methylthioribose-1-phosphate isomerase of Drosophila pseudoobscura pseudoobscura (Fruit fly).